An 89-amino-acid polypeptide reads, in one-letter code: NADH-ubiquinone oxidoreductase chain 4L (89 aa).

The next 3 helical transmembrane spans lie at 1–21 (MNITLILFLIGILGFVLNRKN), 22–42 (IILMLISIEIMLLAITFLILV), and 57–77 (IYIIVVAGAESAIGLGILVAF).

The protein belongs to the complex I subunit 4L family.

The protein localises to the mitochondrion membrane. It carries out the reaction a ubiquinone + NADH + 5 H(+)(in) = a ubiquinol + NAD(+) + 4 H(+)(out). Functionally, core subunit of the mitochondrial membrane respiratory chain NADH dehydrogenase (Complex I) that is believed to belong to the minimal assembly required for catalysis. Complex I functions in the transfer of electrons from NADH to the respiratory chain. The immediate electron acceptor for the enzyme is believed to be ubiquinone. The chain is NADH-ubiquinone oxidoreductase chain 4L (ND4L) from Podospora anserina (strain S / ATCC MYA-4624 / DSM 980 / FGSC 10383) (Pleurage anserina).